The chain runs to 348 residues: Anthranilate phosphoribosyltransferase (348 aa).

5-phospho-alpha-D-ribose 1-diphosphate-binding positions include Gly-84, 87-88, Thr-92, 94-97, 112-120, and Ser-124; these read GD, NITT, and KHGNRSVSS. Anthranilate is bound at residue Gly-84. Position 96 (Thr-96) interacts with Mg(2+). Residue Asn-115 coordinates anthranilate. Arg-170 lines the anthranilate pocket. Residues Asp-228 and Glu-229 each contribute to the Mg(2+) site.

Belongs to the anthranilate phosphoribosyltransferase family. In terms of assembly, homodimer. Requires Mg(2+) as cofactor.

The catalysed reaction is N-(5-phospho-beta-D-ribosyl)anthranilate + diphosphate = 5-phospho-alpha-D-ribose 1-diphosphate + anthranilate. It participates in amino-acid biosynthesis; L-tryptophan biosynthesis; L-tryptophan from chorismate: step 2/5. Functionally, catalyzes the transfer of the phosphoribosyl group of 5-phosphorylribose-1-pyrophosphate (PRPP) to anthranilate to yield N-(5'-phosphoribosyl)-anthranilate (PRA). This Corynebacterium glutamicum (strain R) protein is Anthranilate phosphoribosyltransferase.